The sequence spans 330 residues: Aspartate--ammonia ligase (330 aa).

Belongs to the class-II aminoacyl-tRNA synthetase family. AsnA subfamily.

The protein localises to the cytoplasm. It carries out the reaction L-aspartate + NH4(+) + ATP = L-asparagine + AMP + diphosphate + H(+). It functions in the pathway amino-acid biosynthesis; L-asparagine biosynthesis; L-asparagine from L-aspartate (ammonia route): step 1/1. The chain is Aspartate--ammonia ligase from Streptococcus agalactiae serotype III (strain NEM316).